An 808-amino-acid chain; its full sequence is Piwi-like protein 1 (808 aa).

In terms of domain architecture, PAZ spans R214–G333. The disordered stretch occupies residues S300 to L322. A Piwi domain is found at H492 to R790.

The protein belongs to the argonaute family. Piwi subfamily. As to expression, expressed in dividing adult somatic stem cells (neoblasts).

In Schmidtea mediterranea (Freshwater planarian flatworm), this protein is Piwi-like protein 1 (wi-1).